The primary structure comprises 355 residues: UDP-N-acetylglucosamine--N-acetylmuramyl-(pentapeptide) pyrophosphoryl-undecaprenol N-acetylglucosamine transferase (355 aa).

UDP-N-acetyl-alpha-D-glucosamine is bound by residues 13–15 (TGG), Asn125, Arg162, Ser190, Ile244, and Gln289.

This sequence belongs to the glycosyltransferase 28 family. MurG subfamily.

It localises to the cell inner membrane. It carries out the reaction di-trans,octa-cis-undecaprenyl diphospho-N-acetyl-alpha-D-muramoyl-L-alanyl-D-glutamyl-meso-2,6-diaminopimeloyl-D-alanyl-D-alanine + UDP-N-acetyl-alpha-D-glucosamine = di-trans,octa-cis-undecaprenyl diphospho-[N-acetyl-alpha-D-glucosaminyl-(1-&gt;4)]-N-acetyl-alpha-D-muramoyl-L-alanyl-D-glutamyl-meso-2,6-diaminopimeloyl-D-alanyl-D-alanine + UDP + H(+). It functions in the pathway cell wall biogenesis; peptidoglycan biosynthesis. In terms of biological role, cell wall formation. Catalyzes the transfer of a GlcNAc subunit on undecaprenyl-pyrophosphoryl-MurNAc-pentapeptide (lipid intermediate I) to form undecaprenyl-pyrophosphoryl-MurNAc-(pentapeptide)GlcNAc (lipid intermediate II). The sequence is that of UDP-N-acetylglucosamine--N-acetylmuramyl-(pentapeptide) pyrophosphoryl-undecaprenol N-acetylglucosamine transferase from Neisseria meningitidis serogroup A / serotype 4A (strain DSM 15465 / Z2491).